The chain runs to 428 residues: GTPase Obg (428 aa).

The 158-residue stretch at Met1–Leu158 folds into the Obg domain. The disordered stretch occupies residues Ala117–Pro145. Residues Ala159–Glu329 form the OBG-type G domain. GTP-binding positions include Gly165–Ser172, Phe190–Val194, Asp212–Gly215, Asn282–Asp285, and Ser310–Val312. Mg(2+) is bound by residues Ser172 and Thr192. One can recognise an OCT domain in the interval Lys350 to Asp428.

This sequence belongs to the TRAFAC class OBG-HflX-like GTPase superfamily. OBG GTPase family. In terms of assembly, monomer. Mg(2+) is required as a cofactor.

Its subcellular location is the cytoplasm. Its function is as follows. An essential GTPase which binds GTP, GDP and possibly (p)ppGpp with moderate affinity, with high nucleotide exchange rates and a fairly low GTP hydrolysis rate. Plays a role in control of the cell cycle, stress response, ribosome biogenesis and in those bacteria that undergo differentiation, in morphogenesis control. This Bacillus cereus (strain ATCC 10987 / NRS 248) protein is GTPase Obg.